We begin with the raw amino-acid sequence, 361 residues long: Large ribosomal subunit protein mL45 (361 aa).

It belongs to the mitochondrion-specific ribosomal protein mL45 family.

Its subcellular location is the mitochondrion. The sequence is that of Large ribosomal subunit protein mL45 (mrpl-45) from Caenorhabditis briggsae.